A 114-amino-acid chain; its full sequence is Iron-sulfur cluster insertion protein ErpA (114 aa).

Residues Cys42, Cys106, and Cys108 each contribute to the iron-sulfur cluster site.

This sequence belongs to the HesB/IscA family. As to quaternary structure, homodimer. Iron-sulfur cluster is required as a cofactor.

Its function is as follows. Required for insertion of 4Fe-4S clusters for at least IspG. The polypeptide is Iron-sulfur cluster insertion protein ErpA (Citrobacter koseri (strain ATCC BAA-895 / CDC 4225-83 / SGSC4696)).